The chain runs to 216 residues: Cytidylate kinase (216 aa).

Position 7–15 (7–15 (GPSGTGKST)) interacts with ATP.

The protein belongs to the cytidylate kinase family. Type 1 subfamily.

The protein resides in the cytoplasm. The catalysed reaction is CMP + ATP = CDP + ADP. It carries out the reaction dCMP + ATP = dCDP + ADP. In Chlamydia trachomatis serovar D (strain ATCC VR-885 / DSM 19411 / UW-3/Cx), this protein is Cytidylate kinase.